A 460-amino-acid polypeptide reads, in one-letter code: V-type ATP synthase beta chain (460 aa).

Belongs to the ATPase alpha/beta chains family.

Its function is as follows. Produces ATP from ADP in the presence of a proton gradient across the membrane. The V-type beta chain is a regulatory subunit. In Dictyoglomus turgidum (strain DSM 6724 / Z-1310), this protein is V-type ATP synthase beta chain.